We begin with the raw amino-acid sequence, 256 residues long: Capsid protein (256 aa).

Residues 3–20 (KRPADIVISTPASKVRRK) carry the Bipartite nuclear localization signal motif. The Nuclear localization signal motif lies at 40–54 (RRRTWVNRPMYRKPM). A zinc finger lies at 68–85 (CEGPCKVQSYEQRHDVAH). The Nuclear export signal signature appears at 101-122 (ITHRTGKRFCIKSIYVLGKIWM). The Bipartite nuclear localization signal motif lies at 200 to 247 (NRFYKIYNHCTYNHQEAAKYENHTENALLLYMACTHASNPVYATLKIR).

This sequence belongs to the geminiviridae capsid protein family. Homomultimer. Binds to single-stranded and double-stranded viral DNA. Interacts (via nuclear localization signals) with host importin alpha-1a.

Its subcellular location is the virion. The protein localises to the host nucleus. Its function is as follows. Encapsidates the viral genome into characteristic twinned ('geminate') particles. Binds the genomic viral ssDNA and shuttles it into and out of the cell nucleus. Plays a role in protection of the genome from degradation, virus acquisition and transmission by insect vectors, infectivity, and systemic movement. The CP of monopartite geminiviruses is absolutely essential for virus movement. This chain is Capsid protein, found in Tomato leaf curl virus (strain Australia) (ToLCV).